The chain runs to 259 residues: Short-chain dehydrogenase chry4 (259 aa).

Positions 37, 55, 81, 154, 158, 185, and 187 each coordinate NADP(+). The active-site Proton donor is Y154. K158 (lowers pKa of active site Tyr) is an active-site residue.

It belongs to the short-chain dehydrogenases/reductases (SDR) family.

It participates in pigment biosynthesis. Functionally, short-chain dehydrogenase; part of the gene cluster that mediates the biosynthesis of the yellow pigment chrysogine. Pyruvic acid and anthranilic acid are likely substrates for the nonribosomal peptide synthetase chry1/NRPS14, with pyruvic acid adenylated by the first A domain and anthranilic acid by the second. If pyruvic acid and anthranilic acid are merged and released from chry1/NRPS14 by hydrolysis, a subsequent amidation would lead to 2-pyruvoylaminobenzamide. This process is probably catalyzed by the amidotransferase chry2 using glutamine as amino donor. The dehydrogenase chry5 that has a terminal berberine bridge domain for C-N cyclization could catalyze the cyclization of 2-pyruvoylaminobenzamide to yield acetyl-4(3H)-quinazolidinone. A final reduction of acetyl-4(3H)-quinazolidinone catalyzed by the oxidoreductase chry4 would result in chrysogine. The chain is Short-chain dehydrogenase chry4 from Gibberella zeae (strain ATCC MYA-4620 / CBS 123657 / FGSC 9075 / NRRL 31084 / PH-1) (Wheat head blight fungus).